Here is a 257-residue protein sequence, read N- to C-terminus: Triosephosphate isomerase (257 aa).

9 to 11 (NWK) is a substrate binding site. Histidine 97 acts as the Electrophile in catalysis. Glutamate 169 acts as the Proton acceptor in catalysis. Residues glycine 175, serine 214, and 235-236 (GG) contribute to the substrate site.

The protein belongs to the triosephosphate isomerase family. In terms of assembly, homodimer.

It localises to the cytoplasm. The enzyme catalyses D-glyceraldehyde 3-phosphate = dihydroxyacetone phosphate. The protein operates within carbohydrate biosynthesis; gluconeogenesis. Its pathway is carbohydrate degradation; glycolysis; D-glyceraldehyde 3-phosphate from glycerone phosphate: step 1/1. In terms of biological role, involved in the gluconeogenesis. Catalyzes stereospecifically the conversion of dihydroxyacetone phosphate (DHAP) to D-glyceraldehyde-3-phosphate (G3P). The polypeptide is Triosephosphate isomerase (Vibrio cholerae serotype O1 (strain ATCC 39315 / El Tor Inaba N16961)).